The chain runs to 292 residues: F-box only protein 16 (292 aa).

The region spanning 86–132 (LDFTTKLPRVLSLYIFSFLDPRSLCRCAQVCWHWKNLAELDQLWMLK) is the F-box domain. Disordered regions lie at residues 188–224 (SPEE…SSDK) and 238–292 (RDPM…PLCP). The segment covering 194 to 204 (SPLSAFRSSSS) has biased composition (low complexity). Over residues 260–273 (RQSHDKKNKLQDRT) the composition is skewed to basic and acidic residues.

In terms of assembly, part of a SCF (SKP1-cullin-F-box) protein ligase complex. Expressed in heart, spleen and colon.

In terms of biological role, probably recognizes and binds to some phosphorylated proteins and promotes their ubiquitination and degradation. This is F-box only protein 16 (FBXO16) from Homo sapiens (Human).